The following is a 223-amino-acid chain: Phosphoribosylformylglycinamidine synthase subunit PurQ (223 aa).

Residues 3–223 (FAVLVFPGSN…MVNSWREQNV (221 aa)) enclose the Glutamine amidotransferase type-1 domain. Cysteine 85 serves as the catalytic Nucleophile. Residues histidine 193 and glutamate 195 contribute to the active site.

As to quaternary structure, part of the FGAM synthase complex composed of 1 PurL, 1 PurQ and 2 PurS subunits.

Its subcellular location is the cytoplasm. The catalysed reaction is N(2)-formyl-N(1)-(5-phospho-beta-D-ribosyl)glycinamide + L-glutamine + ATP + H2O = 2-formamido-N(1)-(5-O-phospho-beta-D-ribosyl)acetamidine + L-glutamate + ADP + phosphate + H(+). The enzyme catalyses L-glutamine + H2O = L-glutamate + NH4(+). Its pathway is purine metabolism; IMP biosynthesis via de novo pathway; 5-amino-1-(5-phospho-D-ribosyl)imidazole from N(2)-formyl-N(1)-(5-phospho-D-ribosyl)glycinamide: step 1/2. Functionally, part of the phosphoribosylformylglycinamidine synthase complex involved in the purines biosynthetic pathway. Catalyzes the ATP-dependent conversion of formylglycinamide ribonucleotide (FGAR) and glutamine to yield formylglycinamidine ribonucleotide (FGAM) and glutamate. The FGAM synthase complex is composed of three subunits. PurQ produces an ammonia molecule by converting glutamine to glutamate. PurL transfers the ammonia molecule to FGAR to form FGAM in an ATP-dependent manner. PurS interacts with PurQ and PurL and is thought to assist in the transfer of the ammonia molecule from PurQ to PurL. This is Phosphoribosylformylglycinamidine synthase subunit PurQ from Staphylococcus haemolyticus (strain JCSC1435).